We begin with the raw amino-acid sequence, 277 residues long: Ribosomally synthesized cyclic peptide asperipin-2a precursor aprA (277 aa).

A signal peptide spans 1 to 19; sequence MHLSRYIAVLLSASSFVSA. 12 propeptides span residues 20–69, 76–88, 95–107, 114–126, 133–145, 152–164, 171–183, 190–202, 209–221, 228–240, 247–259, and 266–277; these read LPLQ…LDKR, KRNA…LDKR, and KRNAETPEDLDK.

Post-translationally, aprA is processed by kexin proteases to produce 11 identical copies of the hexapeptide Phe-Tyr-Tyr-Thr-Gly-Tyr, that is further modified aprY and aprR to yield asperipin-2a. The bicyclic structure of asperipin-2a is likely synthesized by the single ustYa family oxidase aprY. The reductase aprR may be required for the final reduction to yield asperipin-2a.

The protein operates within secondary metabolite biosynthesis. Functionally, ribosomally synthesized cyclic peptide asperipin-2a precursor; part of the gene cluster that mediates the biosynthesis of the asperipin-2a, a bicyclic peptide that possesses two macrocyclic ether rings consisting of 14- and 17-membered paracyclophans. The aprA translated product contains a 11-fold repeated peptide embedding the hexapeptide Phe-Tyr-Tyr-Thr-Gly-Tyr, that is converted into asperipin-2a. After being excised from the precursor peptide by kexin proteases, the core peptides are cyclized and modified post-translationally by enzymes encoded within the corresponding gene cluster. The protein is Ribosomally synthesized cyclic peptide asperipin-2a precursor aprA of Aspergillus flavus (strain ATCC 200026 / FGSC A1120 / IAM 13836 / NRRL 3357 / JCM 12722 / SRRC 167).